The sequence spans 779 residues: Lysosome membrane protein 2-A (779 aa).

At 1-17 (MVKRGCCHRKMVNHKGC) the chain is on the cytoplasmic side. A helical transmembrane segment spans residues 18 to 38 (LVSGIFLAVIGAVLFILAFAL). Over 39-732 (LPHLINQTTQ…LLNSQFKLIK (694 aa)) the chain is Lumenal. N-linked (GlcNAc...) asparagine glycans are attached at residues asparagine 44, asparagine 86, asparagine 95, asparagine 114, asparagine 117, asparagine 201, asparagine 239, asparagine 262, asparagine 266, asparagine 277, asparagine 369, asparagine 410, asparagine 440, asparagine 508, asparagine 543, asparagine 601, asparagine 619, asparagine 651, and asparagine 693. A helical membrane pass occupies residues 733 to 753 (ILGFVPVIVVSIIGGIILIAG). Residues 754-779 (ISMFAFGFKKLRQQKQQGYQAIINNE) lie on the Cytoplasmic side of the membrane. The Tyrosine-type lysosomal sorting signal signature appears at 771 to 774 (GYQA).

This sequence belongs to the CD36 family. In terms of processing, heavily glycosylated.

It localises to the lysosome membrane. May act as a lysosomal receptor. May be involved in macropinocytosis and fluid phase exocytosis. Binds to the anionic phospholipid phosphoinositol 4,5-bisphosphate, but not to phosphatidylcholine and only weakly to phosphatidylserine. This Dictyostelium discoideum (Social amoeba) protein is Lysosome membrane protein 2-A (lmpA).